A 295-amino-acid chain; its full sequence is Non-selective voltage-gated ion channel VDAC2 (295 aa).

Residues lysine 24 and lysine 32 each contribute to the ATP site. Residue lysine 32 is modified to N6-acetyllysine; alternate. Lysine 32 bears the N6-succinyllysine; alternate mark. Lysine 32 participates in a covalent cross-link: Glycyl lysine isopeptide (Lys-Gly) (interchain with G-Cter in ubiquitin); alternate. 2 beta stranded membrane passes run 38–45 (LVKLDVKT) and 51–60 (VEFSTSGSSN). Residue lysine 65 forms a Glycyl lysine isopeptide (Lys-Gly) (interchain with G-Cter in ubiquitin) linkage. Residues 66-76 (VSGTLETKYKW) form a beta stranded membrane-spanning segment. Tyrosine 79 carries the phosphotyrosine modification. 3 beta stranded membrane-spanning segments follow: residues 81-88 (LTFTEKWN), 92-100 (TLGTEIAIE), and 107-116 (LKLTFDTTFS). Position 119 is a phosphothreonine (threonine 119). Lysine 121 carries the N6-acetyllysine; alternate modification. Residue lysine 121 forms a Glycyl lysine isopeptide (Lys-Gly) (interchain with G-Cter in ubiquitin); alternate linkage. Residue lysine 122 forms a Glycyl lysine isopeptide (Lys-Gly) (interchain with G-Cter in ubiquitin) linkage. 4 consecutive transmembrane segments (beta stranded) span residues 122–131 (KSGKIKSAYK), 135–144 (INLGCDVDFD), 148–157 (PAIHGSAVFG), and 161–170 (WLAGYQMTFD). Lysine 173 is covalently cross-linked (Glycyl lysine isopeptide (Lys-Gly) (interchain with G-Cter in ubiquitin)). The next 6 membrane-spanning stretches (beta stranded) occupy residues 177–187 (TRSNFAVGYRT), 190–197 (FQLHTNVN), 201–210 (EFGGSIYQKV), 214–222 (FDTSVNLAW), 229–238 (TRFGIAAKYQ), and 243–250 (ASISAKVN). A Phosphoserine modification is found at serine 252. NAD(+)-binding positions include 254-256 (LIG) and 272-276 (SALVD). The next 2 membrane-spanning stretches (beta stranded) occupy residues 254-263 (LIGVGYTQTL) and 267-275 (VKLTLSALV). N6-acetyllysine; alternate is present on lysine 278. A Glycyl lysine isopeptide (Lys-Gly) (interchain with G-Cter in ubiquitin); alternate cross-link involves residue lysine 278. Residues 285–295 (HKLGLALELEA) form a beta stranded membrane-spanning segment.

It belongs to the eukaryotic mitochondrial porin family. As to quaternary structure, monomer, homodimer and higher order oligomers; formation of higher order structures is necessary for scramblase activity. Interacts with ARMC12 in a TBC1D21-dependent manner. Interacts with KLC3. Interacts with SPATA33. Interacts with PPP3CC in a SPATA33-dependent manner. Ubiquitinated by PRKN during mitophagy, leading to its degradation and enhancement of mitophagy. Deubiquitinated by USP30. As to expression, highest levels of expression detected in testis, less but still abundant expression in heart, kidney, brain, and skeletal muscle. Expressed in the sperm midpiece (at protein level).

The protein resides in the mitochondrion outer membrane. It localises to the membrane. It carries out the reaction chloride(in) = chloride(out). The enzyme catalyses K(+)(in) = K(+)(out). The catalysed reaction is a 1,2-diacyl-sn-glycero-3-phospho-L-serine(in) = a 1,2-diacyl-sn-glycero-3-phospho-L-serine(out). It catalyses the reaction a 1,2-diacyl-sn-glycero-3-phosphocholine(in) = a 1,2-diacyl-sn-glycero-3-phosphocholine(out). It carries out the reaction a 1,2-diacyl-sn-glycero-3-phospho-(1D-myo-inositol)(in) = a 1,2-diacyl-sn-glycero-3-phospho-(1D-myo-inositol)(out). In terms of biological role, non-selective voltage-gated ion channel that mediates the transport of anions and cations through the mitochondrion outer membrane and plasma membrane. The channel adopts an open conformation at zero mV and a closed conformation at both positive and negative potentials. There are two populations of channels; the main that functions in a lower open-state conductance with lower ion selectivity, that switch, in a voltage-dependent manner, from the open to a low-conducting 'closed' state and the other that has a normal ion selectivity in the typical high conductance, 'open' state. Binds various lipids, including the sphingolipid ceramide, the phospholipid phosphatidylcholine, and the sterols cholesterol and oxysterol. Binding of ceramide promotes the mitochondrial outer membrane permeabilization (MOMP) apoptotic pathway. Catalyzes the scrambling of phospholipids across the outer mitochondrial membrane; the mechanism is unrelated to channel activity and is capable of translocating both anionic and zwitterionic phospholipids. The protein is Non-selective voltage-gated ion channel VDAC2 of Mus musculus (Mouse).